The following is a 188-amino-acid chain: MKHKVGILGGTFDPPHLAHLHMAEEAKKQLELEKILFLPNKIPPHKHISGMASINERVEMLQLMIEGIDSFEIDTRELMRTGKSYTYDTMRDMIIEQPDTDFYFIIGGDMVEYLPKWYHIDDLVKMVTFVGVNRPLYQPEVPYDVVKIDMPKTTISSTEIRNDIEHAEAFLPEKVWSYIKEHQLYGKK.

The protein belongs to the NadD family.

The enzyme catalyses nicotinate beta-D-ribonucleotide + ATP + H(+) = deamido-NAD(+) + diphosphate. The protein operates within cofactor biosynthesis; NAD(+) biosynthesis; deamido-NAD(+) from nicotinate D-ribonucleotide: step 1/1. In terms of biological role, catalyzes the reversible adenylation of nicotinate mononucleotide (NaMN) to nicotinic acid adenine dinucleotide (NaAD). The polypeptide is Probable nicotinate-nucleotide adenylyltransferase (Listeria monocytogenes serovar 1/2a (strain ATCC BAA-679 / EGD-e)).